The sequence spans 1368 residues: Kinesin-like protein KIF24 (1368 aa).

An SAM domain is found at 1–64 (MASWLYECLC…FQLIKIIKIM (64 aa)). The segment at 89–112 (ELRSGPRRQLNFDSPADNKDRNAS) is disordered. A phosphoserine mark is found at Ser102 and Ser112. A Kinesin motor domain is found at 223 to 546 (KIRVCVRKRP…LRYADRVKEL (324 aa)). Position 313 to 320 (313 to 320 (GQTGAGKT)) interacts with ATP. Phosphoserine is present on Ser478. The interval 478-709 (SLLALKECIR…STKCKKVQTV (232 aa)) is interaction with MPHOSPH9. Polar residues predominate over residues 557–576 (TSRNRTSGNSSPKRIQSSPG). Disordered regions lie at residues 557–584 (TSRN…DKCS) and 602–639 (GSTR…SPSQ). The residue at position 584 (Ser584) is a Phosphoserine. Phosphothreonine; by NEK2 is present on Thr621. At Ser622 the chain carries Phosphoserine; by NEK2. A Phosphoserine modification is found at Ser646. Disordered stretches follow at residues 651–670 (TVRS…PLCS), 729–753 (HRAE…WTNI), 792–849 (QYRP…NTLE), 864–938 (GPEK…LAEK), and 952–984 (RGGG…EEDG). Residues 819-830 (QVEELDDSDFSE) show a composition bias toward acidic residues. 2 positions are modified to phosphoserine: Ser826 and Ser829. Polar residues-rich tracts occupy residues 839–849 (QRATKQRNTLE) and 871–881 (ERQQSLFSSPR). Basic and acidic residues predominate over residues 882 to 906 (TGDKKDLTKSWVDSRDPINHRRAAL). Ser1012 is subject to Phosphoserine. Disordered regions lie at residues 1054–1073 (MSLL…QLVQ) and 1086–1148 (GGPV…SREA). The segment covering 1106 to 1119 (SSATRHLWLSSSPP) has biased composition (polar residues). Residues 1138 to 1148 (HPADKLPSREA) are compositionally biased toward basic and acidic residues.

This sequence belongs to the TRAFAC class myosin-kinesin ATPase superfamily. Kinesin family. As to quaternary structure, interacts with CCP110, CEP97, TALPID3. Interacts with MPHOSPH9.

It is found in the cytoplasm. It localises to the cytoskeleton. The protein resides in the microtubule organizing center. The protein localises to the centrosome. Its subcellular location is the centriole. In terms of biological role, microtubule-dependent motor protein that acts as a negative regulator of ciliogenesis by mediating recruitment of CCP110 to mother centriole in cycling cells, leading to restrict nucleation of cilia at centrioles. Mediates depolymerization of microtubules of centriolar origin, possibly to suppress aberrant cilia formation. Following activation by NEK2 involved in disassembly of primary cilium during G2/M phase but does not disassemble fully formed ciliary axonemes. As cilium assembly and disassembly is proposed to coexist in a dynamic equilibrium may suppress nascent cilium assembly and, potentially, ciliar re-assembly in cells that have already disassembled their cilia ensuring the completion of cilium removal in the later stages of the cell cycle. Plays an important role in recruiting MPHOSPH9, a negative regulator of cilia formation to the distal end of mother centriole. This Homo sapiens (Human) protein is Kinesin-like protein KIF24 (KIF24).